The following is a 554-amino-acid chain: Valerianol synthase TPS1E (554 aa).

Positions 307 and 311 each coordinate Mg(2+). The DDXXD motif signature appears at 326-330 (VQRWD). Mg(2+)-binding residues include Asp452, Ser456, and Glu460.

Belongs to the terpene synthase family. Mg(2+) serves as cofactor.

It catalyses the reaction (2E,6E)-farnesyl diphosphate + H2O = valerianol + diphosphate. The protein operates within secondary metabolite biosynthesis; terpenoid biosynthesis. Functionally, terpene synthase that catalyzes the biosynthesis of the terpene valerianol, which is a volatile compound of floral scent. The sequence is that of Valerianol synthase TPS1E from Camellia hiemalis (Camellia).